The chain runs to 248 residues: 1-(5-phosphoribosyl)-5-[(5-phosphoribosylamino)methylideneamino] imidazole-4-carboxamide isomerase (248 aa).

Asp-8 functions as the Proton acceptor in the catalytic mechanism. Residue Asp-131 is the Proton donor of the active site.

This sequence belongs to the HisA/HisF family.

Its subcellular location is the cytoplasm. It catalyses the reaction 1-(5-phospho-beta-D-ribosyl)-5-[(5-phospho-beta-D-ribosylamino)methylideneamino]imidazole-4-carboxamide = 5-[(5-phospho-1-deoxy-D-ribulos-1-ylimino)methylamino]-1-(5-phospho-beta-D-ribosyl)imidazole-4-carboxamide. It participates in amino-acid biosynthesis; L-histidine biosynthesis; L-histidine from 5-phospho-alpha-D-ribose 1-diphosphate: step 4/9. This is 1-(5-phosphoribosyl)-5-[(5-phosphoribosylamino)methylideneamino] imidazole-4-carboxamide isomerase from Paracidovorax citrulli (strain AAC00-1) (Acidovorax citrulli).